We begin with the raw amino-acid sequence, 58 residues long: Small ribosomal subunit protein bS21 (58 aa).

The protein belongs to the bacterial ribosomal protein bS21 family.

The polypeptide is Small ribosomal subunit protein bS21 (Staphylococcus saprophyticus subsp. saprophyticus (strain ATCC 15305 / DSM 20229 / NCIMB 8711 / NCTC 7292 / S-41)).